We begin with the raw amino-acid sequence, 535 residues long: CTP synthase (535 aa).

An amidoligase domain region spans residues 1–268; the sequence is MSTKYIFVTG…DQIVCDHLKL (268 aa). Serine 14 is a binding site for CTP. Residue serine 14 participates in UTP binding. Residue 15–20 coordinates ATP; the sequence is SMGKGI. Residue tyrosine 55 coordinates L-glutamine. Position 72 (aspartate 72) interacts with ATP. Mg(2+) is bound by residues aspartate 72 and glutamate 142. CTP-binding positions include 149–151, 189–194, and lysine 225; these read DME and KTKIAQ. UTP is bound by residues 189–194 and lysine 225; that span reads KTKIAQ. Valine 243 provides a ligand contact to ATP. Residues 293–535 enclose the Glutamine amidotransferase type-1 domain; the sequence is KIALVGKYVE…FIRVAVENSK (243 aa). L-glutamine is bound at residue glycine 355. The active-site Nucleophile; for glutamine hydrolysis is the cysteine 382. Residues 383 to 386, glutamate 406, and arginine 464 contribute to the L-glutamine site; that span reads LGMQ. Catalysis depends on residues histidine 509 and glutamate 511.

The protein belongs to the CTP synthase family. In terms of assembly, homotetramer. In contrast to E.coli CTP synthase, remains a tetramer at dilute enzyme concentrations even in the absence of Mg(2+), ATP and UTP.

It carries out the reaction UTP + L-glutamine + ATP + H2O = CTP + L-glutamate + ADP + phosphate + 2 H(+). The enzyme catalyses L-glutamine + H2O = L-glutamate + NH4(+). The catalysed reaction is UTP + NH4(+) + ATP = CTP + ADP + phosphate + 2 H(+). It functions in the pathway pyrimidine metabolism; CTP biosynthesis via de novo pathway; CTP from UDP: step 2/2. With respect to regulation, allosterically activated by GTP, when glutamine is the substrate. GTP has no effect on the reaction when ammonia is the substrate. The allosteric effector GTP functions by stabilizing the protein conformation that binds the tetrahedral intermediate(s) formed during glutamine hydrolysis. Also activated by magnesium. Allosterically inhibited by CTP. Functionally, catalyzes the ATP-dependent amination of UTP to CTP with either L-glutamine or ammonia as the source of nitrogen. Is essential for the synthesis of CTP de novo. Contrary to other bacterial CTP synthases, the lactococcal enzyme is also able to convert dUTP to dCTP, but this reaction may not play a significant physiological role. Regulates intracellular CTP levels through interactions with the four ribonucleotide triphosphates. The sequence is that of CTP synthase from Lactococcus lactis subsp. cremoris (strain MG1363).